Consider the following 452-residue polypeptide: Cobyrinate a,c-diamide synthase (452 aa).

Residues 246 to 439 enclose the GATase cobBQ-type domain; that stretch reads TLAYALDDAF…LHVHFYQDEQ (194 aa). Cys328 serves as the catalytic Nucleophile.

The protein belongs to the CobB/CbiA family. It depends on Mg(2+) as a cofactor.

It catalyses the reaction cob(II)yrinate + 2 L-glutamine + 2 ATP + 2 H2O = cob(II)yrinate a,c diamide + 2 L-glutamate + 2 ADP + 2 phosphate + 2 H(+). It functions in the pathway cofactor biosynthesis; adenosylcobalamin biosynthesis; cob(II)yrinate a,c-diamide from sirohydrochlorin (anaerobic route): step 10/10. Functionally, catalyzes the ATP-dependent amidation of the two carboxylate groups at positions a and c of cobyrinate, using either L-glutamine or ammonia as the nitrogen source. In Streptococcus sanguinis (strain SK36), this protein is Cobyrinate a,c-diamide synthase.